The primary structure comprises 479 residues: Proline--tRNA ligase 2 (479 aa).

The protein belongs to the class-II aminoacyl-tRNA synthetase family. ProS type 3 subfamily. In terms of assembly, homodimer.

It localises to the cytoplasm. It catalyses the reaction tRNA(Pro) + L-proline + ATP = L-prolyl-tRNA(Pro) + AMP + diphosphate. Catalyzes the attachment of proline to tRNA(Pro) in a two-step reaction: proline is first activated by ATP to form Pro-AMP and then transferred to the acceptor end of tRNA(Pro). The sequence is that of Proline--tRNA ligase 2 from Rhodococcus jostii (strain RHA1).